Consider the following 510-residue polypeptide: Protein disulfide-isomerase (510 aa).

An N-terminal signal peptide occupies residues 1-20 (MLRRALLCLALTALFRAGAG). Positions 27–136 (HVLVLHKGNF…IVNWLKKRTG (110 aa)) constitute a Thioredoxin 1 domain. Active-site nucleophile residues include C55 and C58. A disulfide bridge connects residues C55 and C58. N6-acetyllysine is present on K202. An N6-succinyllysine mark is found at K224 and K273. A phosphoserine mark is found at S333 and S359. The Thioredoxin 2 domain maps to 351 to 477 (GKIKPHLMSQ…FKKFLESGGQ (127 aa)). Residues C399 and C402 each act as nucleophile in the active site. A disulfide bridge connects residues C399 and C402. S429 carries the post-translational modification Phosphoserine. Residues 473-510 (ESGGQDGAGDDDDLEDLEEAEEPDLEEDDDQKAVKDEL) form a disordered region. Positions 480-502 (AGDDDDLEDLEEAEEPDLEEDDD) are enriched in acidic residues. The Prevents secretion from ER motif lies at 507–510 (KDEL).

It belongs to the protein disulfide isomerase family. As to quaternary structure, heterodimer; heterodimerizes with the protein microsomal triglyceride transfer MTTP. Homodimer. Monomers and homotetramers may also occur. Interacts with P4HA2, forming a heterotetramer consisting of 2 alpha subunits (P4HA2) and 2 beta (P4HB), where P4HB plays the role of a structural subunit; this tetramer catalyzes the formation of 4-hydroxyproline in collagen. Also constitutes the structural subunit of the microsomal triacylglycerol transfer protein MTTP in mammalian cells. Stabilizes both enzymes and retain them in the ER without contributing to the catalytic activity. Binds UBQLN1. Interacts with ERO1B. Interacts with ILDR2. Interacts with ERN1/IRE1A (via N-terminus); the interaction is enhanced by phosphorylation of P4HB by FAM20C in response to endoplasmic reticulum stress and results in attenuation of ERN1 activity. Phosphorylation of Ser-359 by FAM20C is induced by endoplasmic reticulum stress and results in a functional switch from oxidoreductase to molecular chaperone. It also promotes interaction with ERN1.

Its subcellular location is the endoplasmic reticulum. It is found in the endoplasmic reticulum lumen. It localises to the melanosome. The protein localises to the cell membrane. The catalysed reaction is Catalyzes the rearrangement of -S-S- bonds in proteins.. This multifunctional protein catalyzes the formation, breakage and rearrangement of disulfide bonds. At the cell surface, seems to act as a reductase that cleaves disulfide bonds of proteins attached to the cell. May therefore cause structural modifications of exofacial proteins. Inside the cell, seems to form/rearrange disulfide bonds of nascent proteins. At high concentrations and following phosphorylation by FAM20C, functions as a chaperone that inhibits aggregation of misfolded proteins. At low concentrations, facilitates aggregation (anti-chaperone activity). May be involved with other chaperones in the structural modification of the TG precursor in hormone biogenesis. Also acts as a structural subunit of various enzymes such as prolyl 4-hydroxylase and microsomal triacylglycerol transfer protein MTTP. Receptor for LGALS9; the interaction retains P4HB at the cell surface of Th2 T helper cells, increasing disulfide reductase activity at the plasma membrane, altering the plasma membrane redox state and enhancing cell migration. The protein is Protein disulfide-isomerase (P4HB) of Bos taurus (Bovine).